Reading from the N-terminus, the 272-residue chain is Putative UTP--glucose-1-phosphate uridylyltransferase (272 aa).

Belongs to the UDPGP type 2 family.

The enzyme catalyses alpha-D-glucose 1-phosphate + UTP + H(+) = UDP-alpha-D-glucose + diphosphate. This Bacillus subtilis (strain 168) protein is Putative UTP--glucose-1-phosphate uridylyltransferase (ytdA).